A 369-amino-acid polypeptide reads, in one-letter code: Maltose/maltodextrin import ATP-binding protein MalK (369 aa).

Residues 4 to 234 (VQLRNVTKAW…PADRFVAGFI (231 aa)) form the ABC transporter domain. 36-43 (GPSGCGKS) is an ATP binding site.

The protein belongs to the ABC transporter superfamily. Maltooligosaccharide importer (TC 3.A.1.1.1) family. In terms of assembly, the complex is composed of two ATP-binding proteins (MalK), two transmembrane proteins (MalG and MalK) and a solute-binding protein (MalE).

Its subcellular location is the cell inner membrane. It carries out the reaction D-maltose(out) + ATP + H2O = D-maltose(in) + ADP + phosphate + H(+). Functionally, part of the ABC transporter complex MalEFGK involved in maltose/maltodextrin import. Responsible for energy coupling to the transport system. This is Maltose/maltodextrin import ATP-binding protein MalK from Salmonella paratyphi A (strain ATCC 9150 / SARB42).